Here is a 247-residue protein sequence, read N- to C-terminus: Adenosylcobinamide-GDP ribazoletransferase (247 aa).

The next 5 membrane-spanning stretches (helical) occupy residues Ile34–Leu54, Cys59–Phe79, Gly113–Leu133, Val138–Tyr158, and Val194–Ile214.

The protein belongs to the CobS family. Mg(2+) serves as cofactor.

The protein localises to the cell inner membrane. It carries out the reaction alpha-ribazole + adenosylcob(III)inamide-GDP = adenosylcob(III)alamin + GMP + H(+). The catalysed reaction is alpha-ribazole 5'-phosphate + adenosylcob(III)inamide-GDP = adenosylcob(III)alamin 5'-phosphate + GMP + H(+). The protein operates within cofactor biosynthesis; adenosylcobalamin biosynthesis; adenosylcobalamin from cob(II)yrinate a,c-diamide: step 7/7. Joins adenosylcobinamide-GDP and alpha-ribazole to generate adenosylcobalamin (Ado-cobalamin). Also synthesizes adenosylcobalamin 5'-phosphate from adenosylcobinamide-GDP and alpha-ribazole 5'-phosphate. This chain is Adenosylcobinamide-GDP ribazoletransferase, found in Salmonella arizonae (strain ATCC BAA-731 / CDC346-86 / RSK2980).